A 226-amino-acid chain; its full sequence is ATP synthase subunit a (226 aa).

Helical transmembrane passes span 18 to 38 (FITG…SLGA), 79 to 99 (LAGT…IPGF), 105 to 125 (SWSF…FEGI), 134 to 154 (FAHF…IEII), 179 to 199 (LIML…VLFF), and 201 to 221 (GILQ…GAVL).

Belongs to the ATPase A chain family. In terms of assembly, F-type ATPases have 2 components, CF(1) - the catalytic core - and CF(0) - the membrane proton channel. CF(1) has five subunits: alpha(3), beta(3), gamma(1), delta(1), epsilon(1). CF(0) has three main subunits: a(1), b(2) and c(9-12). The alpha and beta chains form an alternating ring which encloses part of the gamma chain. CF(1) is attached to CF(0) by a central stalk formed by the gamma and epsilon chains, while a peripheral stalk is formed by the delta and b chains.

The protein resides in the cell inner membrane. Functionally, key component of the proton channel; it plays a direct role in the translocation of protons across the membrane. The polypeptide is ATP synthase subunit a (Helicobacter pylori (strain J99 / ATCC 700824) (Campylobacter pylori J99)).